A 543-amino-acid chain; its full sequence is Thiamine transport system permease protein ThiP (543 aa).

The next 12 helical transmembrane spans lie at 19 to 39, 64 to 84, 102 to 122, 142 to 162, 205 to 225, 250 to 270, 300 to 320, 343 to 363, 379 to 399, 406 to 426, 468 to 488, and 510 to 530; these read VAGG…LLAL, FTIW…IPIA, LFAL…TSIY, DIYG…PLAV, GMIG…LTLG, AVAL…ILRL, IIVI…VVVS, LALG…LVAA, GASL…FILL, FVMA…PFAV, GMAF…IALF, and FDAA…MMIA. Residues 62 to 266 enclose the ABC transmembrane type-1 1 domain; the sequence is ARFTIWQAVA…QLALTLLILL (205 aa). The ABC transmembrane type-1 2 domain occupies 339-530; the sequence is IATSLALGFS…VLCLALMMIA (192 aa).

This sequence belongs to the binding-protein-dependent transport system permease family. CysTW subfamily. The complex is composed of two ATP-binding proteins (ThiQ), two transmembrane proteins (ThiP) and a solute-binding protein (ThiB).

It localises to the cell inner membrane. In terms of biological role, part of the ABC transporter complex ThiBPQ involved in thiamine import. Probably responsible for the translocation of the substrate across the membrane. The chain is Thiamine transport system permease protein ThiP (thiP) from Brucella abortus (strain 2308).